We begin with the raw amino-acid sequence, 735 residues long: ATP-dependent DNA helicase Hel308 (735 aa).

ATP contacts are provided by residues Gln32 and 50 to 57 (APTGSGKT). The Helicase ATP-binding domain occupies 37–201 (QAGVEKGENL…WIGGKIVESS (165 aa)). The short motif at 146 to 149 (DEIH) is the DEAH box element. The region spanning 235–431 (DLDLAAEAIE…GLRGLRHFIL (197 aa)) is the Helicase C-terminal domain.

The protein belongs to the helicase family. Hel308 subfamily. Monomer.

The enzyme catalyses Couples ATP hydrolysis with the unwinding of duplex DNA by translocating in the 3'-5' direction.. The catalysed reaction is ATP + H2O = ADP + phosphate + H(+). DNA-dependent ATPase and 3'-5' DNA helicase that may be involved in repair of stalled replication forks. The chain is ATP-dependent DNA helicase Hel308 from Aeropyrum pernix (strain ATCC 700893 / DSM 11879 / JCM 9820 / NBRC 100138 / K1).